Consider the following 333-residue polypeptide: Isopenicillin N synthase (333 aa).

Positions 87, 91, and 191 each coordinate isopenicillin N. Positions 87, 91, 191, 216, and 218 each coordinate N-[(5S)-5-amino-5-carboxypentanoyl]-L-cysteinyl-D-valine. The region spanning 180–290 is the Fe2OG dioxygenase domain; the sequence is DTLSCRSLMI…RLSLPFFLHA (111 aa). Residues His-216, Asp-218, and His-272 each coordinate Fe(2+). Arg-281 lines the 2-oxoglutarate pocket. Ser-283 lines the isopenicillin N pocket. Ser-283 is an N-[(5S)-5-amino-5-carboxypentanoyl]-L-cysteinyl-D-valine binding site.

The protein belongs to the iron/ascorbate-dependent oxidoreductase family. Fe cation is required as a cofactor. Requires L-ascorbate as cofactor.

The catalysed reaction is N-[(5S)-5-amino-5-carboxypentanoyl]-L-cysteinyl-D-valine + O2 = isopenicillin N + 2 H2O. Its pathway is antibiotic biosynthesis; penicillin G biosynthesis; penicillin G from L-alpha-aminoadipate and L-cysteine and L-valine: step 2/3. Its function is as follows. Removes, in the presence of oxygen, 4 hydrogen atoms from delta-L-(alpha-aminoadipyl)-L-cysteinyl-D-valine (ACV) to form the azetidinone and thiazolidine rings of isopenicillin. This is Isopenicillin N synthase (pcbC) from Streptomyces microflavus (Streptomyces lipmanii).